A 115-amino-acid polypeptide reads, in one-letter code: Double-headed protease inhibitor, submandibular gland (115 aa).

Kazal-like domains lie at 6-66 (IGRE…ACDI) and 67-115 (ECTE…HGEC). 6 disulfides stabilise this stretch: cysteine 12-cysteine 46, cysteine 24-cysteine 43, cysteine 32-cysteine 64, cysteine 68-cysteine 97, cysteine 75-cysteine 94, and cysteine 83-cysteine 115.

It is found in the secreted. In terms of biological role, this inhibitor is composed of two homologous actively inhibiting halves: one which inhibits trypsin, the other which inhibits elastase. The chain is Double-headed protease inhibitor, submandibular gland from Canis lupus familiaris (Dog).